Here is a 237-residue protein sequence, read N- to C-terminus: Class B acid phosphatase (237 aa).

Residues 1 to 23 (MRKVTLTLSAIALALSLNGAAMA) form the signal peptide. Residue Asp69 is the Nucleophile of the active site. Asp69 and Asp71 together coordinate Mg(2+). The active-site Proton donor is Asp71. Substrate contacts are provided by residues 137-138 (TG) and Lys177. Asp192 is a binding site for Mg(2+).

Belongs to the class B bacterial acid phosphatase family. In terms of assembly, homotetramer. The cofactor is Mg(2+).

It localises to the periplasm. The enzyme catalyses a phosphate monoester + H2O = an alcohol + phosphate. Functionally, dephosphorylates several organic phosphate monoesters. Also has a phosphotransferase activity catalyzing the transfer of low-energy phosphate groups from organic phosphate monoesters to free hydroxyl groups of various organic compounds. This Proteus mirabilis (strain HI4320) protein is Class B acid phosphatase.